The primary structure comprises 445 residues: Protein trichome berefringence-like 7 (445 aa).

The helical; Signal-anchor for type II membrane protein transmembrane segment at 69-89 (IIAGTIVSFLVIIAGGYLYVV) threads the bilayer. A GDS motif motif is present at residues 188–190 (GDS). The DCXHWCLPGXXDXWN motif motif lies at 418 to 432 (DCSHWCLPGVPDIWN).

Belongs to the PC-esterase family. TBL subfamily.

The protein resides in the membrane. Its function is as follows. May act as a bridging protein that binds pectin and other cell wall polysaccharides. Probably involved in maintaining esterification of pectins. May be involved in the specific O-acetylation of cell wall polymers. This is Protein trichome berefringence-like 7 (TBL7) from Arabidopsis thaliana (Mouse-ear cress).